A 348-amino-acid polypeptide reads, in one-letter code: NADH-ubiquinone oxidoreductase chain 2 (348 aa).

A run of 10 helical transmembrane segments spans residues 1-21, 25-45, 60-80, 93-115, 149-169, 177-197, 200-220, 239-259, 274-294, and 326-346; these read MSPY…TITF, SWLM…PLMV, FLTQ…NAWM, LSAP…HFWL, LNTT…GLGG, KVLA…IQYS, LALL…LTLM, IATM…PLTG, NLPA…FFYL, and LAML…MVAI.

This sequence belongs to the complex I subunit 2 family.

Its subcellular location is the mitochondrion inner membrane. It catalyses the reaction a ubiquinone + NADH + 5 H(+)(in) = a ubiquinol + NAD(+) + 4 H(+)(out). In terms of biological role, core subunit of the mitochondrial membrane respiratory chain NADH dehydrogenase (Complex I) that is believed to belong to the minimal assembly required for catalysis. Complex I functions in the transfer of electrons from NADH to the respiratory chain. The immediate electron acceptor for the enzyme is believed to be ubiquinone. In Latimeria chalumnae (Coelacanth), this protein is NADH-ubiquinone oxidoreductase chain 2 (MT-ND2).